The sequence spans 1117 residues: Protocadherin-11 X-linked (1117 aa).

Positions 1–23 are cleaved as a signal peptide; it reads MDLLSGTHIFAVLLACIVFQSGA. Topologically, residues 24–812 are extracellular; the sequence is QEKNYTIREE…ASSPSSDYVK (789 aa). N-linked (GlcNAc...) asparagine glycosylation is found at Asn-27 and Asn-48. Cadherin domains lie at 27 to 139, 140 to 249, 250 to 355, 362 to 466, 467 to 570, 571 to 673, and 677 to 795; these read NYTI…APLF, PATV…RPVF, KENE…IPSI, NPIN…APVF, TQPF…SPVF, THNE…KPVF, and SSNY…TPVT. A glycan (N-linked (GlcNAc...) asparagine) is linked at Asn-344. The N-linked (GlcNAc...) asparagine glycan is linked to Asn-553. The helical transmembrane segment at 813–833 threads the bilayer; sequence IVVAIVAGTITVILVIFITAV. The Cytoplasmic portion of the chain corresponds to 834 to 1117; the sequence is VRCQQSPHLK…DGNSDPESGK (284 aa). Over residues 1029 to 1039 the composition is skewed to polar residues; the sequence is TVEIWTHPQPQ. Residues 1029–1117 form a disordered region; it reads TVEIWTHPQP…DGNSDPESGK (89 aa).

As to expression, expressed in adrenal gland, brain, heart, kidney, lung, prostate, skeletal muscle, testis and thymus.

The protein localises to the cell membrane. Potential calcium-dependent cell-adhesion protein. This is Protocadherin-11 X-linked (PCDH11X) from Sus scrofa (Pig).